Consider the following 1390-residue polypeptide: Contactin (1390 aa).

The first 18 residues, 1 to 18, serve as a signal peptide directing secretion; the sequence is MLAKIGLLASILVLNLVG. Residues 25–67 form a disordered region; sequence SENLPDPDPQSGQQPQNYQPSYNKDYSPRYNPLYTGQQSADPN. Residues 58-67 are compositionally biased toward polar residues; it reads YTGQQSADPN. Ig-like C2-type domains lie at 362–463, 468–561, 576–656, 661–745, 756–843, and 848–939; these read PYFV…AHLN, MEFN…LRVT, PKVF…IYIN, PQFT…TSFS, PSFK…ARVI, and IRFI…TSVS. Residue asparagine 369 is glycosylated (N-linked (GlcNAc...) asparagine). 4 disulfide bridges follow: cysteine 388-cysteine 446, cysteine 489-cysteine 540, cysteine 593-cysteine 640, and cysteine 682-cysteine 734. N-linked (GlcNAc...) asparagine glycans are attached at residues asparagine 537, asparagine 604, asparagine 629, asparagine 691, and asparagine 774. Cystine bridges form between cysteine 779–cysteine 827 and cysteine 870–cysteine 923. N-linked (GlcNAc...) asparagine glycans are attached at residues asparagine 912, asparagine 986, and asparagine 991. Fibronectin type-III domains follow at residues 946–1048, 1053–1151, 1156–1254, and 1259–1357; these read APGG…TYED, APRN…SAED, APQK…TYRK, and PPSS…MGKT. 3 N-linked (GlcNAc...) asparagine glycosylation sites follow: asparagine 1166, asparagine 1171, and asparagine 1307. Alanine 1362 carries the GPI-anchor amidated alanine lipid modification. Positions 1363 to 1390 are cleaved as a propeptide — removed in mature form; it reads NTRHGHNINTALILSTLLLISTFLYTSQ.

This sequence belongs to the immunoglobulin superfamily. Contactin family. As to quaternary structure, forms a complex with Nrg and Nrx. Forms a complex composed of septa junction proteins Nrx-IV/Nrx, Tsf2/MTf, Cont and Nrg during late embryogenesis. In terms of processing, N-glycosylated. As to expression, expressed in ectodermally derived epithelial cells from stage 12. All these tissues, such as epidermis, hindgut, foregut, salivary glands and trachea, which contain pleated septate junctions. Expressed by ectodermally derived epithelial cells and along peripheral nerves. Not present in midline glial cells. Expressed in epithelial cells and glial cells of peripheral nerves.

The protein localises to the cell membrane. The protein resides in the cell junction. Its subcellular location is the septate junction. Its function is as follows. Required for organization of septate junctions and paracellular barrier functions. Septate junctions, which are the equivalent of vertebrates tight junctions, are characterized by regular arrays of transverse structures that span the intermembrane space and form a physical barrier to diffusion. The protein is Contactin (Cont) of Drosophila melanogaster (Fruit fly).